The sequence spans 338 residues: MNSGRRSLMSATASLSLLLCIFTTFVVVSNGELQRFIEPAKSDGSVSFIVIGDWGRRGSFNQSLVAYQMGKIGEKIDLDFVVSTGDNFYDNGLFSEHDPNFEQSFSNIYTAPSLQKQWYSVLGNHDYRGDAEAQLSSVLREIDSRWICLRSFVVDAELVEMFFVDTTPFVKEYYTEADGHSYDWRAVPSRNSYVKALLRDLEVSLKSSKARWKIVVGHHAMRSIGHHGDTKELNEELLPILKENGVDLYMNGHDHCLQHMSDEDSPIQFLTSGAGSKAWRGDINPVTINPKLLKFYYDGQGFMSARFTHSDAEIVFYDVFGEILHKWVTSKQLLHSSV.

The signal sequence occupies residues 1 to 31 (MNSGRRSLMSATASLSLLLCIFTTFVVVSNG). Asp-53 lines the Fe cation pocket. The N-linked (GlcNAc...) asparagine glycan is linked to Asn-61. Residues Asp-86 and Tyr-89 each contribute to the Fe cation site. Asp-86 contributes to the Zn(2+) binding site. Zn(2+) contacts are provided by Asn-124 and His-218. Residue His-227 is the Proton donor of the active site. Residue His-253 participates in Zn(2+) binding. Residue 253 to 255 (HDH) participates in substrate binding. His-255 is a binding site for Fe cation.

The protein belongs to the metallophosphoesterase superfamily. Purple acid phosphatase family. In terms of assembly, homodimer. Fe cation is required as a cofactor. Requires Zn(2+) as cofactor. In terms of tissue distribution, expressed in roots, stems, leaves, flowers and siliques.

Its subcellular location is the secreted. It carries out the reaction a phosphate monoester + H2O = an alcohol + phosphate. The catalysed reaction is 2 a phenolic donor + H2O2 = 2 a phenolic radical donor + 2 H2O. Its activity is regulated as follows. Inhibited by phosphate and molybdate. Functionally, metallo-phosphoesterase involved in phosphate metabolism. Has a peroxidase activity. This is Purple acid phosphatase 17 (PAP17) from Arabidopsis thaliana (Mouse-ear cress).